The primary structure comprises 926 residues: Neurofilament medium polypeptide (926 aa).

The segment covering 1 to 10 has biased composition (polar residues); that stretch reads MSYTLDSLGN. Disordered regions lie at residues 1-51 and 79-102; these read MSYT…VSSS and QSSS…SNEK. Ser-2 is modified (N-acetylserine). The segment at 2–104 is head; the sequence is SYTLDSLGNP…KLSRSNEKEQ (103 aa). The segment covering 21–44 has biased composition (low complexity); it reads RSSFSRISGSPSSGFRSQSWSRGS. The residue at position 30 (Ser-30) is a Phosphoserine. Arg-42 is subject to Omega-N-methylarginine. An O-linked (GlcNAc) threonine glycan is attached at Thr-47. Position 99 is a phosphoserine (Ser-99). One can recognise an IF rod domain in the interval 101–412; the sequence is EKEQIQGLND…KLLEGEETRF (312 aa). A coil 1A region spans residues 105–136; the sequence is IQGLNDRFAGYIEKVHYLEQQNKEIEAEIQAL. Residues 137 to 149 form a linker 1 region; the sequence is RQKQASHAQLGDA. The coil 1B stretch occupies residues 150–248; that stretch reads YDQEIRELRA…EEEVADLLAQ (99 aa). Position 226 is a phosphoserine (Ser-226). Residues 249 to 265 are linker 12; it reads IQASHITVERKDYLKTD. A coil 2A region spans residues 266–287; that stretch reads ISTALKEIRSQLESHSDQNMHQ. The segment at 288–291 is linker 2; that stretch reads AEEW. The tract at residues 292 to 412 is coil 2B; that stretch reads FKCRYAKLTE…KLLEGEETRF (121 aa). Tyr-320 carries the post-translational modification Phosphotyrosine. Residues Ser-346, Ser-418, Ser-430, Ser-468, and Ser-484 each carry the phosphoserine modification. A tail region spans residues 413-926; it reads STFAGSITGP…AIVKEVTQSD (514 aa). The interval 487 to 860 is disordered; the sequence is EEVKEEEAEE…EKKGGDKSEE (374 aa). The span at 490-507 shows a compositional bias: acidic residues; it reads KEEEAEEKEEKEEAEEEV. Copy 1 of the repeat occupies 512–516; the sequence is KSPVK. The segment at 512–698 is 17 X 5 AA approximate tandem repeats of K-S-P-[TVEA]-[AKETP]; that stretch reads KSPVKATAPE…KSPAPKSPVE (187 aa). Ser-513 carries the post-translational modification Phosphoserine. Acidic residues predominate over residues 523–543; sequence KEEEGEKEEEEGQEEEEEEEE. Residues 544 to 563 are compositionally biased toward basic and acidic residues; that stretch reads AAKSDQAEEGGSEKEGSSEK. A phosphoserine mark is found at Ser-547, Ser-555, Ser-560, and Ser-561. Residues 564–584 show a composition bias toward acidic residues; sequence EEGEQEEEGETEAEGEGEEAA. Thr-574 bears the Phosphothreonine mark. Residues 585-619 are compositionally biased toward basic and acidic residues; sequence AEAKEEKKMEEKAEEVAPKEELAAEAKVEKPEKAK. 16 repeat units span residues 619-623, 624-628, 629-633, 634-638, 639-643, 644-648, 649-653, 654-658, 659-663, 664-668, 669-673, 674-678, 679-683, 684-688, 689-693, and 694-698. Phosphothreonine is present on Thr-628. Phosphoserine is present on residues Ser-630, Ser-635, and Ser-640. Thr-647 is modified (phosphothreonine). Phosphoserine is present on residues Ser-650 and Ser-655. Residues Ser-665 and Ser-670 each carry the phosphoserine modification. Residues 673-692 show a composition bias toward low complexity; sequence AKSPTAKSPTAKSPAAKSPA. Phosphothreonine is present on Thr-677. 10 positions are modified to phosphoserine: Ser-680, Ser-685, Ser-690, Ser-695, Ser-727, Ser-751, Ser-757, Ser-771, Ser-831, and Ser-847. Composition is skewed to basic and acidic residues over residues 696-764, 771-811, and 826-838; these read PVEE…EEVP, SPEK…KEDI, and TKEK…EEKG. Positions 849 to 860 are enriched in basic and acidic residues; sequence GDEKKGGDKSEE.

Forms heterodimers with NEFL; which can further hetero-oligomerize (in vitro). Forms heterodimers with INA (in vitro). Phosphorylated on a number of serine residues in the repeated K-S-P tripeptide motif. Phosphorylation of NFH may result in the formation of interfilament cross-links that are important in the maintenance of axonal caliber. In terms of processing, phosphorylation seems to play a major role in the functioning of the larger neurofilament polypeptides (NF-M and NF-H), the levels of phosphorylation being altered developmentally and coincidentally with a change in the neurofilament function. Post-translationally, phosphorylated in the head and rod regions by the PKC kinase PKN1, leading to the inhibition of polymerization.

It localises to the cytoplasm. Its subcellular location is the cytoskeleton. It is found in the cell projection. The protein resides in the axon. Neurofilaments usually contain three intermediate filament proteins: NEFL, NEFM, and NEFH which are involved in the maintenance of neuronal caliber. May additionally cooperate with the neuronal intermediate filament proteins PRPH and INA to form neuronal filamentous networks. The protein is Neurofilament medium polypeptide (NEFM) of Bos taurus (Bovine).